The chain runs to 308 residues: SAP30-binding protein (308 aa).

Residues 15–101 (AEDSEPESDG…EAEKRDPQEL (87 aa)) are disordered. Residues 16–26 (EDSEPESDGEA) show a composition bias toward acidic residues. 4 positions are modified to phosphoserine: serine 18, serine 22, serine 43, and serine 52. Positions 57-78 (DEDGYEEEEDENSRQSEDDDSE) are enriched in acidic residues. The segment covering 79 to 99 (TEKPEADDPKDNTEAEKRDPQ) has biased composition (basic and acidic residues). Residue lysine 95 forms a Glycyl lysine isopeptide (Lys-Gly) (interchain with G-Cter in SUMO2) linkage. Serine 113 is modified (phosphoserine). Glycyl lysine isopeptide (Lys-Gly) (interchain with G-Cter in SUMO2) cross-links involve residues lysine 220, lysine 304, and lysine 305.

The protein belongs to the HCNGP family. As to quaternary structure, interacts with histone deacetylase complex subunit SAP30.

Its subcellular location is the nucleus. Functionally, plays a role in transcriptional repression by promoting histone deacetylase activity, leading to deacetylation of histone H3. May be involved in the regulation of beta-2-microglobulin genes. In terms of biological role, (Microbial infection) Involved in transcriptional repression of HHV-1 genes TK and gC. The protein is SAP30-binding protein of Homo sapiens (Human).